Here is a 97-residue protein sequence, read N- to C-terminus: uncharacterized protein (97 aa).

It to B.licheniformis xpaL1 and to B.subtilis XhlA.

This is an uncharacterized protein from Bacillus licheniformis.